Consider the following 294-residue polypeptide: Diaminopimelate epimerase (294 aa).

2 residues coordinate substrate: Asn11 and Asn78. Catalysis depends on Cys87, which acts as the Proton donor. Substrate contacts are provided by residues 88–89 (GN), Asn167, Asn203, and 221–222 (ER). Cys230 functions as the Proton acceptor in the catalytic mechanism. 231-232 (GT) contributes to the substrate binding site.

Belongs to the diaminopimelate epimerase family. In terms of assembly, homodimer.

It localises to the cytoplasm. The catalysed reaction is (2S,6S)-2,6-diaminopimelate = meso-2,6-diaminopimelate. The protein operates within amino-acid biosynthesis; L-lysine biosynthesis via DAP pathway; DL-2,6-diaminopimelate from LL-2,6-diaminopimelate: step 1/1. Catalyzes the stereoinversion of LL-2,6-diaminopimelate (L,L-DAP) to meso-diaminopimelate (meso-DAP), a precursor of L-lysine and an essential component of the bacterial peptidoglycan. This is Diaminopimelate epimerase from Mycolicibacterium paratuberculosis (strain ATCC BAA-968 / K-10) (Mycobacterium paratuberculosis).